Reading from the N-terminus, the 187-residue chain is Adenylate kinase (187 aa).

An ATP-binding site is contributed by 11 to 16 (GAGKGT). Positions 31–60 (STGDILREAVKNQTAMGIEAKRYMDAGDLV) are NMP. AMP contacts are provided by residues T32, R37, 58–60 (DLV), 86–89 (GFPR), and Q93. Residues 127-137 (GRAEIEGRADD) form an LID region. R128 is a binding site for ATP. Positions 134 and 145 each coordinate AMP. Position 173 (G173) interacts with ATP.

Belongs to the adenylate kinase family. In terms of assembly, monomer.

Its subcellular location is the cytoplasm. The enzyme catalyses AMP + ATP = 2 ADP. The protein operates within purine metabolism; AMP biosynthesis via salvage pathway; AMP from ADP: step 1/1. Catalyzes the reversible transfer of the terminal phosphate group between ATP and AMP. Plays an important role in cellular energy homeostasis and in adenine nucleotide metabolism. In Leptospira interrogans serogroup Icterohaemorrhagiae serovar copenhageni (strain Fiocruz L1-130), this protein is Adenylate kinase.